The chain runs to 64 residues: Large ribosomal subunit protein bL35 (64 aa).

Residues 1–15 (MPKSKTHSGTAKRFK) show a composition bias toward basic residues. The interval 1–23 (MPKSKTHSGTAKRFKVSGSGKIL) is disordered.

The protein belongs to the bacterial ribosomal protein bL35 family.

This Rhodococcus jostii (strain RHA1) protein is Large ribosomal subunit protein bL35.